A 392-amino-acid polypeptide reads, in one-letter code: MSKTAYVRTKPHLNIGTMGHVDHGKTTLTAAITKVLAERGAGSTTQYVSFDRIDRAPEEAARGITINIAHVEYETDTRHYAHVDMPGHADYVKNMVTGAAQLDGAILVVSALDGIMPQTAEHVLLARQVGVDHIVVALNKADAGDEELTDLVELEVRELLTAHGYGGDAVPVVRVSGLKALEGDPRWTASVEALLDAVDTYVPMPERYLDAPFLLPVENVLTITGRGTVVTGAVERGTVRVGDRVEVLGASVETVVTGLETFGKPMEEAQAGDNVALLLRGVARDTVRRGQVVAAPGSVVPARRFRARVYVLSAREGGRSTPLTTGYRPQFYIRTADVVGDVDLGEEAVARPGDTVTMTVELGRDVPLETGLGFAIREGGRTVGAGTVTAVE.

Residues 10-206 enclose the tr-type G domain; sequence KPHLNIGTMG…AVDTYVPMPE (197 aa). The tract at residues 19-26 is G1; sequence GHVDHGKT. Residue 19–26 participates in GTP binding; that stretch reads GHVDHGKT. T26 provides a ligand contact to Mg(2+). The segment at 63-67 is G2; the sequence is GITIN. Positions 84 to 87 are G3; that stretch reads DMPG. Residues 84 to 88 and 139 to 142 each bind GTP; these read DMPGH and NKAD. Residues 139–142 form a G4 region; that stretch reads NKAD. The G5 stretch occupies residues 176 to 178; sequence SGL.

The protein belongs to the TRAFAC class translation factor GTPase superfamily. Classic translation factor GTPase family. EF-Tu/EF-1A subfamily. As to quaternary structure, monomer.

The protein localises to the cytoplasm. It carries out the reaction GTP + H2O = GDP + phosphate + H(+). GTP hydrolase that promotes the GTP-dependent binding of aminoacyl-tRNA to the A-site of ribosomes during protein biosynthesis. This is Elongation factor Tu-3 from Streptomyces coelicolor (strain ATCC BAA-471 / A3(2) / M145).